The chain runs to 499 residues: Cytochrome P450 76T24 (499 aa).

The helical transmembrane segment at Val3–Thr23 threads the bilayer. Residues Asn55, Asn76, Asn279, and Asn284 are each glycosylated (N-linked (GlcNAc...) asparagine). Cys442 provides a ligand contact to heme.

It belongs to the cytochrome P450 family.

It is found in the membrane. The protein is Cytochrome P450 76T24 of Catharanthus roseus (Madagascar periwinkle).